Here is a 170-residue protein sequence, read N- to C-terminus: Adenine phosphoribosyltransferase (170 aa).

Belongs to the purine/pyrimidine phosphoribosyltransferase family. As to quaternary structure, homodimer.

The protein localises to the cytoplasm. It catalyses the reaction AMP + diphosphate = 5-phospho-alpha-D-ribose 1-diphosphate + adenine. The protein operates within purine metabolism; AMP biosynthesis via salvage pathway; AMP from adenine: step 1/1. Functionally, catalyzes a salvage reaction resulting in the formation of AMP, that is energically less costly than de novo synthesis. This is Adenine phosphoribosyltransferase from Nitrosopumilus maritimus (strain SCM1).